A 265-amino-acid chain; its full sequence is Thymidine kinase 2, mitochondrial (265 aa).

The N-terminal 33 residues, 1–33 (MLLWPLRGWAARALRCFGPGSRGSPASGPGPRR), are a transit peptide targeting the mitochondrion. Low complexity predominate over residues 20-32 (GSRGSPASGPGPR). The disordered stretch occupies residues 20 to 47 (GSRGSPASGPGPRRVQRRAWPPDKEQEK). 57–65 (GNIASGKTT) contributes to the ATP binding site. Residue E133 is the Proton acceptor of the active site.

The protein belongs to the DCK/DGK family. As to quaternary structure, monomer. Predominantly expressed in liver, pancreas, muscle, and brain.

The protein localises to the mitochondrion. The catalysed reaction is thymidine + ATP = dTMP + ADP + H(+). The enzyme catalyses 2'-deoxycytidine + ATP = dCMP + ADP + H(+). It catalyses the reaction 2'-deoxyuridine + ATP = dUMP + ADP + H(+). Phosphorylates thymidine, deoxycytidine, and deoxyuridine in the mitochondrial matrix. In non-replicating cells, where cytosolic dNTP synthesis is down-regulated, mtDNA synthesis depends solely on TK2 and DGUOK. Widely used as target of antiviral and chemotherapeutic agents. The polypeptide is Thymidine kinase 2, mitochondrial (Homo sapiens (Human)).